Here is a 382-residue protein sequence, read N- to C-terminus: Rubredoxin-NAD(+) reductase (382 aa).

FAD-binding positions include 9 to 12 (TGLA), 33 to 34 (TA), lysine 42, valine 80, glutamate 156, aspartate 275, valine 287, and lysine 318.

This sequence belongs to the FAD-dependent oxidoreductase family. In terms of assembly, homodimer. The cofactor is FAD.

The protein resides in the cytoplasm. The catalysed reaction is 2 reduced [rubredoxin] + NAD(+) + H(+) = 2 oxidized [rubredoxin] + NADH. Its pathway is hydrocarbon metabolism; alkane degradation. Its function is as follows. Involved in the hydrocarbon hydroxylating system, which transfers electrons from NADH to rubredoxin reductase and then through rubredoxin to alkane 1 monooxygenase. The polypeptide is Rubredoxin-NAD(+) reductase (rubB) (Alcanivorax borkumensis (strain ATCC 700651 / DSM 11573 / NCIMB 13689 / SK2)).